We begin with the raw amino-acid sequence, 482 residues long: tRNA modification GTPase MnmE (482 aa).

(6S)-5-formyl-5,6,7,8-tetrahydrofolate is bound by residues R25, E82, and K135. The region spanning 231–404 (GIKVVIAGQP…LRRVLLDIAG (174 aa)) is the TrmE-type G domain. Residue N241 participates in K(+) binding. GTP is bound by residues 241–246 (NAGKSS), 260–266 (TPIAGTT), 285–288 (DTAG), and 385–387 (SAR). S245 contacts Mg(2+). Residues T260, I262, and T265 each contribute to the K(+) site. Residue T266 participates in Mg(2+) binding. Position 482 (K482) interacts with (6S)-5-formyl-5,6,7,8-tetrahydrofolate.

This sequence belongs to the TRAFAC class TrmE-Era-EngA-EngB-Septin-like GTPase superfamily. TrmE GTPase family. Homodimer. Heterotetramer of two MnmE and two MnmG subunits. K(+) is required as a cofactor.

Its subcellular location is the cytoplasm. Its function is as follows. Exhibits a very high intrinsic GTPase hydrolysis rate. Involved in the addition of a carboxymethylaminomethyl (cmnm) group at the wobble position (U34) of certain tRNAs, forming tRNA-cmnm(5)s(2)U34. The chain is tRNA modification GTPase MnmE from Paracidovorax citrulli (strain AAC00-1) (Acidovorax citrulli).